Consider the following 120-residue polypeptide: Large ribosomal subunit protein uL18 (120 aa).

Belongs to the universal ribosomal protein uL18 family. In terms of assembly, part of the 50S ribosomal subunit; part of the 5S rRNA/L5/L18/L25 subcomplex. Contacts the 5S and 23S rRNAs.

Its function is as follows. This is one of the proteins that bind and probably mediate the attachment of the 5S RNA into the large ribosomal subunit, where it forms part of the central protuberance. The chain is Large ribosomal subunit protein uL18 from Bartonella tribocorum (strain CIP 105476 / IBS 506).